A 104-amino-acid polypeptide reads, in one-letter code: Large ribosomal subunit protein bL21 (104 aa).

It belongs to the bacterial ribosomal protein bL21 family. In terms of assembly, part of the 50S ribosomal subunit. Contacts protein L20.

This protein binds to 23S rRNA in the presence of protein L20. This chain is Large ribosomal subunit protein bL21, found in Desulfosudis oleivorans (strain DSM 6200 / JCM 39069 / Hxd3) (Desulfococcus oleovorans).